The sequence spans 318 residues: Ribose-phosphate pyrophosphokinase 2 (318 aa).

96 to 101 (RQDKKD) is a binding site for ATP. Aspartate 128, histidine 130, aspartate 139, and aspartate 143 together coordinate Mg(2+). Histidine 130 lines the ATP pocket. A binding of phosphoribosylpyrophosphate region spans residues 212–227 (KDRVAILVDDMADTCG).

This sequence belongs to the ribose-phosphate pyrophosphokinase family. In terms of assembly, homodimer. The active form is probably a hexamer composed of 3 homodimers. Mg(2+) serves as cofactor.

It carries out the reaction D-ribose 5-phosphate + ATP = 5-phospho-alpha-D-ribose 1-diphosphate + AMP + H(+). The protein operates within metabolic intermediate biosynthesis; 5-phospho-alpha-D-ribose 1-diphosphate biosynthesis; 5-phospho-alpha-D-ribose 1-diphosphate from D-ribose 5-phosphate (route I): step 1/1. Its activity is regulated as follows. Activated by magnesium and inorganic phosphate. Competitively or non-competitively inhibited by ADP, 2,3-bisphosphoglyceride or GDP. In terms of biological role, catalyzes the synthesis of phosphoribosylpyrophosphate (PRPP) that is essential for nucleotide synthesis. In Xenopus laevis (African clawed frog), this protein is Ribose-phosphate pyrophosphokinase 2 (prps2).